Reading from the N-terminus, the 700-residue chain is Phosphoribosylformylglycinamidine synthase subunit PurL (700 aa).

Residue His34 is part of the active site. Tyr37 contributes to the ATP binding site. Glu79 provides a ligand contact to Mg(2+). Residues 80–83 (SHNH) and Arg102 each bind substrate. His81 acts as the Proton acceptor in catalysis. Residue Asp103 participates in Mg(2+) binding. Gln227 is a substrate binding site. Position 255 (Asp255) interacts with Mg(2+). 299-301 (ESQ) is a substrate binding site. ATP contacts are provided by Asp476 and Gly513. A Mg(2+)-binding site is contributed by Asn514. A substrate-binding site is contributed by Ser516.

It belongs to the FGAMS family. Monomer. Part of the FGAM synthase complex composed of 1 PurL, 1 PurQ and 2 PurS subunits.

The protein localises to the cytoplasm. It catalyses the reaction N(2)-formyl-N(1)-(5-phospho-beta-D-ribosyl)glycinamide + L-glutamine + ATP + H2O = 2-formamido-N(1)-(5-O-phospho-beta-D-ribosyl)acetamidine + L-glutamate + ADP + phosphate + H(+). The protein operates within purine metabolism; IMP biosynthesis via de novo pathway; 5-amino-1-(5-phospho-D-ribosyl)imidazole from N(2)-formyl-N(1)-(5-phospho-D-ribosyl)glycinamide: step 1/2. Its function is as follows. Part of the phosphoribosylformylglycinamidine synthase complex involved in the purines biosynthetic pathway. Catalyzes the ATP-dependent conversion of formylglycinamide ribonucleotide (FGAR) and glutamine to yield formylglycinamidine ribonucleotide (FGAM) and glutamate. The FGAM synthase complex is composed of three subunits. PurQ produces an ammonia molecule by converting glutamine to glutamate. PurL transfers the ammonia molecule to FGAR to form FGAM in an ATP-dependent manner. PurS interacts with PurQ and PurL and is thought to assist in the transfer of the ammonia molecule from PurQ to PurL. The chain is Phosphoribosylformylglycinamidine synthase subunit PurL from Halobacterium salinarum (strain ATCC 29341 / DSM 671 / R1).